A 252-amino-acid chain; its full sequence is Phosphate import ATP-binding protein PstB (252 aa).

The ABC transporter domain occupies 6–247 (ISAENLNLFY…PKDQRTEDYI (242 aa)). An ATP-binding site is contributed by 38–45 (GPSGCGKS).

Belongs to the ABC transporter superfamily. Phosphate importer (TC 3.A.1.7) family. As to quaternary structure, the complex is composed of two ATP-binding proteins (PstB), two transmembrane proteins (PstC and PstA) and a solute-binding protein (PstS).

It is found in the cell membrane. The enzyme catalyses phosphate(out) + ATP + H2O = ADP + 2 phosphate(in) + H(+). Its function is as follows. Part of the ABC transporter complex PstSACB involved in phosphate import. Responsible for energy coupling to the transport system. This is Phosphate import ATP-binding protein PstB from Heliobacterium mobile (Heliobacillus mobilis).